We begin with the raw amino-acid sequence, 687 residues long: Glycine--tRNA ligase beta subunit (687 aa).

It belongs to the class-II aminoacyl-tRNA synthetase family. As to quaternary structure, tetramer of two alpha and two beta subunits.

The protein resides in the cytoplasm. The enzyme catalyses tRNA(Gly) + glycine + ATP = glycyl-tRNA(Gly) + AMP + diphosphate. The sequence is that of Glycine--tRNA ligase beta subunit from Neisseria meningitidis serogroup C / serotype 2a (strain ATCC 700532 / DSM 15464 / FAM18).